A 202-amino-acid chain; its full sequence is ATP-dependent Clp protease proteolytic subunit (202 aa).

The active-site Nucleophile is serine 106. Histidine 131 is a catalytic residue.

This sequence belongs to the peptidase S14 family. As to quaternary structure, fourteen ClpP subunits assemble into 2 heptameric rings which stack back to back to give a disk-like structure with a central cavity, resembling the structure of eukaryotic proteasomes.

It is found in the cytoplasm. The catalysed reaction is Hydrolysis of proteins to small peptides in the presence of ATP and magnesium. alpha-casein is the usual test substrate. In the absence of ATP, only oligopeptides shorter than five residues are hydrolyzed (such as succinyl-Leu-Tyr-|-NHMec, and Leu-Tyr-Leu-|-Tyr-Trp, in which cleavage of the -Tyr-|-Leu- and -Tyr-|-Trp bonds also occurs).. In terms of biological role, cleaves peptides in various proteins in a process that requires ATP hydrolysis. Has a chymotrypsin-like activity. Plays a major role in the degradation of misfolded proteins. The polypeptide is ATP-dependent Clp protease proteolytic subunit (Shewanella sp. (strain MR-7)).